The chain runs to 458 residues: MPPGPEVPVQVWVDGQLFQAEQSLLVEHCGFFRGLFRSGMREARAAEVRLGALSASGFRTALRVLRGERPALAAEDELLQAVECAAFLQAPALARFLEHSVTSDNCSLLCDAAAAFGLRDVLHSAALFIRDGSHELVAQLELPEARAYVAALRPSTYVAVSTHTPTPGFLEDASRTMCFLDEEEDAWRTLAALPLEASTLLAGVATLGNKLYIVGGVCGASKEVVELGFCYDPEGGTWCEFPSPHQPRYDMALAGFEGRLYAIGGEFQRTPMSSVECYDPATGCWSFVADLPQPATGVPCAQARGRLFVCLWRPADITAVVEYVVQMDKWLPVAELCRSQSYGHFMVAHRDSLYVVRNGPSDDFLHCAIDCLNLVTGQWTSLPGQFVNSKGALFTSVVRGDTVYTVNRVSTLVYAIEDGTWRLLREKAGFPRPGSLQTFLLRLPPGTTGPVATALPEL.

The BTB domain occupies valine 7–alanine 74. Kelch repeat units follow at residues alanine 159–asparagine 209, lysine 210–glycine 258, arginine 259–glycine 305, leucine 307–arginine 350, and serine 352–glycine 400.

Component of the BCR(KBTBD13) E3 ubiquitin ligase complex, at least composed of CUL3 and KBTBD13 and RBX1. Interacts with CUL3. Autoubiquitinated. As to expression, expressed in skeletal muscle, heart and lung.

It localises to the cytoplasm. Its pathway is protein modification; protein ubiquitination. Functionally, substrate-specific adapter of a BCR (BTB-CUL3-RBX1) E3 ubiquitin ligase complex. The sequence is that of Kelch repeat and BTB domain-containing protein 13 (Kbtbd13) from Mus musculus (Mouse).